Consider the following 203-residue polypeptide: Ras-like protein 1 (203 aa).

Position 17-24 (17-24) interacts with GTP; it reads GGGGVGKS. The Effector region signature appears at 39–47; the sequence is YDPTIEDSY. GTP contacts are provided by residues 64–68 and 123–126; these read DTAGQ and NKCD. Position 200 is a cysteine methyl ester (Cys-200). A lipid anchor (S-farnesyl cysteine) is attached at Cys-200. A propeptide spans 201-203 (removed in mature form); sequence ILM.

It belongs to the small GTPase superfamily. Ras family.

The protein resides in the cell membrane. The catalysed reaction is GTP + H2O = GDP + phosphate + H(+). Alternates between an inactive form bound to GDP and an active form bound to GTP. Activated by a guanine nucleotide-exchange factor (GEF) and inactivated by a GTPase-activating protein (GAP). The protein is Ras-like protein 1 (RAS1) of Mucor circinelloides f. lusitanicus (Mucor racemosus var. lusitanicus).